The chain runs to 278 residues: Nucleotide-binding protein Tmel_1373 (278 aa).

10–17 (GLSGAGKS) contributes to the ATP binding site. 58 to 61 (DSRS) lines the GTP pocket.

This sequence belongs to the RapZ-like family.

Its function is as follows. Displays ATPase and GTPase activities. The sequence is that of Nucleotide-binding protein Tmel_1373 from Thermosipho melanesiensis (strain DSM 12029 / CIP 104789 / BI429).